Here is a 274-residue protein sequence, read N- to C-terminus: Capsid protein (274 aa).

Residues 88-113 (RPAKQVLKGSSSKSQQRDEGEVVFTR) are disordered. Over residues 102–113 (QQRDEGEVVFTR) the composition is skewed to basic and acidic residues.

It localises to the virion. Capsid protein self-assembles to form a capsid about 33 nm in diameter. The capsid encapsulates two genomic RNAs as well as a third, subgenomic RNA (RNA3) (Potential). The protein is Capsid protein of Raspberry bushy dwarf virus (isolate Malling Jewel raspberry/R15) (RBDV).